The following is an 822-amino-acid chain: BDNF/NT-3 growth factors receptor (822 aa).

The first 31 residues, 1-31 (MSSWIRWHGPAMARLWGFCWLVVGFWRAAFA), serve as a signal peptide directing secretion. 2 disulfides stabilise this stretch: cysteine 32/cysteine 38 and cysteine 36/cysteine 45. The 30-residue stretch at 32–61 (CPTSCKCSASRIWCSDPSPGIVAFPRLEPN) folds into the LRRNT domain. Residues 32-430 (CPTSCKCSAS…DVTDKTGREH (399 aa)) are Extracellular-facing. N-linked (GlcNAc...) asparagine glycosylation is found at asparagine 67, asparagine 95, and asparagine 121. LRR repeat units lie at residues 92-113 (GLRN…AFLK) and 116-137 (NLQH…HFRH). The 49-residue stretch at 148 to 196 (NPFTCSCDIMWIKTLQEAKSSPDTQDLYCLNESSKNIPLANLQIPNCGL) folds into the LRRCT domain. Cystine bridges form between cysteine 152/cysteine 176 and cysteine 154/cysteine 194. N-linked (GlcNAc...) asparagine glycosylation is found at asparagine 178, asparagine 205, asparagine 241, asparagine 254, asparagine 280, asparagine 325, asparagine 338, and asparagine 412. Ig-like C2-type domains lie at 197 to 282 (PSAN…VNLT) and 295 to 365 (PTSD…IAKN). The cysteines at positions 218 and 266 are disulfide-linked. Cysteine 302 and cysteine 345 are joined by a disulfide. The helical transmembrane segment at 431–454 (LSVYAVVVIASVVGFCLLVMLFLL) threads the bilayer. Residues 455–466 (KLARHSKFGMKG) form an interaction with MAPK8IP3/JIP3 region. Topologically, residues 455–822 (KLARHSKFGM…ASPVYLDILG (368 aa)) are cytoplasmic. Residues 475 to 498 (DDSASPLHHISNGSNTPSSSEGGP) form a disordered region. Positions 485–495 (SNGSNTPSSSE) are enriched in polar residues. Phosphotyrosine; by autocatalysis is present on tyrosine 516. The region spanning 538–807 (IVLKRELGEG…KNIKGIHTLL (270 aa)) is the Protein kinase domain. Residues 544–552 (LGEGAFGKV) and lysine 572 each bind ATP. Residue aspartate 676 is the Proton acceptor of the active site. 4 positions are modified to phosphotyrosine; by autocatalysis: tyrosine 702, tyrosine 706, tyrosine 707, and tyrosine 817.

This sequence belongs to the protein kinase superfamily. Tyr protein kinase family. Insulin receptor subfamily. Exists in a dynamic equilibrium between monomeric (low affinity) and dimeric (high affinity) structures. Interacts (phosphorylated upon activation by BDNF) with SHC1; mediates SHC1 phosphorylation and activation. Interacts (phosphorylated upon activation by BDNF) with PLCG1 and/or PLCG2; mediates PLCG1 phosphorylation and activation. Interacts with SH2B1 and SH2B2. Interacts with NGFR; may regulate the ligand specificity of the receptor. Interacts with SORCS2; this interaction is important for normal targeting to post-synaptic densities in response to high-frequency stimulation. Interacts (phosphorylated upon ligand-binding) with SH2D1A; regulates NTRK2. Interacts with SQSTM1 and KIDINS220. Interacts (phosphorylated upon ligand-binding) with FRS2; activates the MAPK signaling pathway. Interacts with APPL1. Interacts with MAPK8IP3/JIP3 and KLC1; interaction with KLC1 is mediated by MAPK8IP3/JIP3. Interacts with SORL1; this interaction facilitates NTRK2 trafficking between synaptic plasma membranes, postsynaptic densities and cell soma, hence positively regulates BDNF signaling. Interacts with SLITRK2. Post-translationally, phosphorylated. Undergoes ligand-mediated autophosphorylation that is required for interaction with SHC1 and PLCG1 and other downstream effectors. Isoform TrkB-T-Shc is not phosphorylated. In terms of processing, ubiquitinated. Undergoes polyubiquitination upon activation; regulated by NGFR. Ubiquitination regulates the internalization of the receptor. In terms of tissue distribution, isoform TrkB is expressed in the central and peripheral nervous system. In the central nervous system (CNS), expression is observed in the cerebral cortex, hippocampus, thalamus, choroid plexus, granular layer of the cerebellum, brain stem, and spinal cord. In the peripheral nervous system, it is expressed in many cranial ganglia, the ophthalmic nerve, the vestibular system, multiple facial structures, the submaxillary glands, and dorsal root ganglia. Isoform TrkB-T1 is mainly expressed in the brain but also detected in other tissues including pancreas, kidney and heart. Isoform TrkB-T-Shc is predominantly expressed in the brain.

The protein localises to the cell membrane. The protein resides in the endosome membrane. Its subcellular location is the early endosome membrane. It is found in the cell projection. It localises to the axon. The protein localises to the dendrite. The protein resides in the cytoplasm. Its subcellular location is the perinuclear region. It is found in the postsynaptic density. The catalysed reaction is L-tyrosyl-[protein] + ATP = O-phospho-L-tyrosyl-[protein] + ADP + H(+). The neuronal activity and the influx of calcium positively regulate the kinase activity and the internalization of the receptor which are both important for active signaling. Regulated by NGFR that may control the internalization of the receptor. NGFR may also stimulate the activation by BDNF compared to NTF3 and NTF4. SH2D1A inhibits the autophosphorylation of the receptor, and alters the recruitment and activation of downstream effectors and signaling cascades. The formation of active receptors dimers able to fully transduce the ligand-mediated signal, may be negatively regulated by the formation of inactive heterodimers with the non-catalytic isoforms. Its function is as follows. Receptor tyrosine kinase involved in the development and the maturation of the central and the peripheral nervous systems through regulation of neuron survival, proliferation, migration, differentiation, and synapse formation and plasticity. Receptor for BDNF/brain-derived neurotrophic factor and NTF4/neurotrophin-4. Alternatively can also bind NTF3/neurotrophin-3 which is less efficient in activating the receptor but regulates neuron survival through NTRK2. Upon ligand-binding, undergoes homodimerization, autophosphorylation and activation. Recruits, phosphorylates and/or activates several downstream effectors including SHC1, FRS2, SH2B1, SH2B2 and PLCG1 that regulate distinct overlapping signaling cascades. Through SHC1, FRS2, SH2B1, SH2B2 activates the GRB2-Ras-MAPK cascade that regulates for instance neuronal differentiation including neurite outgrowth. Through the same effectors controls the Ras-PI3 kinase-AKT1 signaling cascade that mainly regulates growth and survival. Through PLCG1 and the downstream protein kinase C-regulated pathways controls synaptic plasticity. Thereby, plays a role in learning and memory by regulating both short term synaptic function and long-term potentiation. PLCG1 also leads to NF-Kappa-B activation and the transcription of genes involved in cell survival. Hence, it is able to suppress anoikis, the apoptosis resulting from loss of cell-matrix interactions. May also play a role in neutrophin-dependent calcium signaling in glial cells and mediate communication between neurons and glia. The sequence is that of BDNF/NT-3 growth factors receptor (NTRK2) from Homo sapiens (Human).